Here is a 296-residue protein sequence, read N- to C-terminus: CCAAT/enhancer-binding protein beta (296 aa).

The tract at residues 1 to 22 (MHRLLAWDAACLPPPPAAFRPM) is required for Lys-133 sumoylation. Arg-3 is subject to Asymmetric dimethylarginine; by CARM1. A required for MYC transcriptional repression region spans residues 22–104 (MEVANFYYEP…YGAKPSKKPA (83 aa)). Lys-39 carries the N6-acetyllysine; alternate modification. Lys-39 is modified (N6-methylated lysine; alternate). 2 positions are modified to N6-acetyllysine; by KAT2A and KAT2B: Lys-98 and Lys-101. At Lys-102 the chain carries N6-acetyllysine; by KAT2A and KAT2B; alternate. Glycyl lysine isopeptide (Lys-Gly) (interchain with G-Cter in SUMO2); alternate cross-links involve residues Lys-102 and Lys-133. Lys-133 participates in a covalent cross-link: Glycyl lysine isopeptide (Lys-Gly) (interchain with G-Cter in SUMO); alternate. Lys-144 is covalently cross-linked (Glycyl lysine isopeptide (Lys-Gly) (interchain with G-Cter in SUMO2)). The tract at residues 171–199 (SGSSGSLSTSSSSSPPGTPSPADAKAAPA) is disordered. Thr-179 carries the phosphothreonine; by GSK3-beta modification. 2 O-linked (GlcNAc) serine glycosylation sites follow: Ser-180 and Ser-181. Residue Ser-184 is modified to Phosphoserine; by GSK3-beta. Thr-188 is modified (phosphothreonine; by RPS6KA1, CDK2 and MAPK). Glycyl lysine isopeptide (Lys-Gly) (interchain with G-Cter in SUMO2) cross-links involve residues Lys-211 and Lys-213. A Phosphothreonine; by RPS6KA1 and PKC/PRKCA modification is found at Thr-217. In terms of domain architecture, bZIP spans 222-285 (SDEYKMRRER…STLRNLFKQL (64 aa)). Residues 226–246 (KMRRERNNIAVRKSRDKAKMR) form a basic motif region. The residue at position 239 (Ser-239) is a Phosphoserine; by PKC/PRKCA. Positions 248 to 255 (LETQHKVL) are leucine-zipper. The residue at position 276 (Ser-276) is a Phosphoserine; by CaMK2. A Glycyl lysine isopeptide (Lys-Gly) (interchain with G-Cter in SUMO2) cross-link involves residue Lys-283.

This sequence belongs to the bZIP family. C/EBP subfamily. Binds DNA as a homodimer and as a heterodimer. Interacts with ATF4. Binds DNA as a heterodimer with ATF4. Interacts with MYB; within the complex, MYB and CEBPB bind to different promoter regions. Can form stable heterodimers with CEBPA, CEBPD and CEBPE. Interacts with SIX1. Isoform 2 and isoform 3 also form heterodimers. Interacts with TRIM28 and PTGES2. Interacts with PRDM16. Interacts with CCDC85B. Forms a complex with THOC5. Interacts with ZNF638; this interaction increases transcriptional activation. Interacts with CIDEA and CIDEC. Interaction with CIDEA increases transcriptional activation of a subset of CEBPB downstream target genes, including ID2, IGF1, PRLR, SOCS1, SOCS3, XDH. Interaction with CIDEC increases transcriptional activation of SOCS1, SOCS3, TGFB1, TGFBR1, ID2 and XDH. Interacts with DDIT3/CHOP. Interacts with EP300; recruits EP300 to chromatin. Interacts with RORA; the interaction disrupts interaction with EP300. Interacts (not methylated) with MED23, MED26, SMARCA2, SMARCB1 and SMARCC1. Interacts with KAT2A and KAT2B. Interacts with ATF5; EP300 is required for ATF5 and CEBPB interaction and DNA binding. Interacts with NFE2L1; the heterodimer represses expression of DSPP during odontoblast differentiation. Post-translationally, sumoylated by polymeric chains of SUMO2 or SUMO3. Sumoylation at Lys-133 is required for inhibition of T-cells proliferation. In adipocytes, sumoylation at Lys-133 by PIAS1 leads to ubiquitination and subsequent proteasomal degradation. Desumoylated by SENP2, which abolishes ubiquitination and stabilizes protein levels. In terms of processing, ubiquitinated, leading to proteasomal degradation. Phosphorylated at Thr-188 by MAPK and CDK2, serves to prime phosphorylation at Thr-179 and Ser-184 by GSK3B and acquire DNA-binding as well as transactivation activities, required to induce adipogenesis. MAPK and CDK2 act sequentially to maintain Thr-188 in the primed phosphorylated state during mitotical cloning expansion and thereby progression of terminal differentiation. Phosphorylation at Thr-217 enhances transactivation activity. Phosphorylation at Ser-276 in response to calcium increases transactivation activity. Phosphorylated at Thr-188 by RPS6KA1. Post-translationally, O-glycosylated, glycosylation at Ser-180 and Ser-181 prevents phosphorylation on Thr-188, Ser-184 and Thr-179 and DNA binding activity which delays the adipocyte differentiation program. In terms of processing, acetylated. Acetylation at Lys-39 is an important and dynamic regulatory event that contributes to its ability to transactivate target genes, including those associated with adipogenesis and adipocyte function. Deacetylation by HDAC1 represses its transactivation activity. Acetylated by KAT2A and KAT2B within a cluster of lysine residues between amino acids 98-102, this acetylation is strongly induced by glucocorticoid treatment and enhances transactivation activity. Methylated. Methylation at Arg-3 by CARM1 and at Lys-39 by EHMT2, inhibits transactivation activity. Methylation is probably inhibited by phosphorylation at Thr-188. As to expression, abundantly expressed in myoblasts. Enriched in brown adipose tissue (BAT) versus white adipose tissue (WAT). Expressed in hepatocytes (at protein level). Expressed in T lymphocytes. The expression in granulosa cells of antral follicles is induced by luteinizing hormone. Expressed in chondrocytes and osteoblasts (at protein level).

Its subcellular location is the nucleus. It is found in the cytoplasm. Functionally, important transcription factor regulating the expression of genes involved in immune and inflammatory responses. Also plays a significant role in adipogenesis, as well as in the gluconeogenic pathway, liver regeneration, and hematopoiesis. The consensus recognition site is 5'-T[TG]NNGNAA[TG]-3'. Its functional capacity is governed by protein interactions and post-translational protein modifications. During early embryogenesis, plays essential and redundant roles with CEBPA. Has a promitotic effect on many cell types such as hepatocytes and adipocytes but has an antiproliferative effect on T-cells by repressing MYC expression, facilitating differentiation along the T-helper 2 lineage. Binds to regulatory regions of several acute-phase and cytokines genes and plays a role in the regulation of acute-phase reaction and inflammation. Also plays a role in intracellular bacteria killing. During adipogenesis, is rapidly expressed and, after activation by phosphorylation, induces CEBPA and PPARG, which turn on the series of adipocyte genes that give rise to the adipocyte phenotype. The delayed transactivation of the CEBPA and PPARG genes by CEBPB appears necessary to allow mitotic clonal expansion and thereby progression of terminal differentiation. Essential for female reproduction because of a critical role in ovarian follicle development. Restricts osteoclastogenesis. Together with NFE2L1; represses expression of DSPP during odontoblast differentiation. Essential for gene expression induction in activated macrophages. Plays a major role in immune responses such as CD4(+) T-cell response, granuloma formation and endotoxin shock. Not essential for intracellular bacteria killing. Its function is as follows. Acts as a dominant negative through heterodimerization with isoform 2. Promotes osteoblast differentiation and osteoclastogenesis. In Mus musculus (Mouse), this protein is CCAAT/enhancer-binding protein beta.